The chain runs to 301 residues: uncharacterized protein (301 aa).

The segment covering 16-28 (EITEESEKTKTDL) has biased composition (basic and acidic residues). The tract at residues 16 to 38 (EITEESEKTKTDLQKANTPNKTE) is disordered. A compositionally biased stretch (polar residues) spans 29 to 38 (QKANTPNKTE). Positions 252-301 (KENVALKMLQRCGWKEGQGLGQHNQGIINPLHVEISGFVTETKHSKINDK) constitute a G-patch domain.

This is an uncharacterized protein from Schizosaccharomyces pombe (strain 972 / ATCC 24843) (Fission yeast).